Reading from the N-terminus, the 343-residue chain is L-threonine 3-dehydrogenase (343 aa).

C40 contacts Zn(2+). Catalysis depends on charge relay system residues T42 and H45. Positions 65, 66, 95, 98, 101, and 109 each coordinate Zn(2+). Residues I177, D197, R202, 264-266 (LGI), and 288-289 (IY) contribute to the NAD(+) site.

It belongs to the zinc-containing alcohol dehydrogenase family. Homotetramer. The cofactor is Zn(2+).

The protein localises to the cytoplasm. The catalysed reaction is L-threonine + NAD(+) = (2S)-2-amino-3-oxobutanoate + NADH + H(+). Its pathway is amino-acid degradation; L-threonine degradation via oxydo-reductase pathway; glycine from L-threonine: step 1/2. Catalyzes the NAD(+)-dependent oxidation of L-threonine to 2-amino-3-ketobutyrate. This chain is L-threonine 3-dehydrogenase, found in Aliivibrio fischeri (strain MJ11) (Vibrio fischeri).